We begin with the raw amino-acid sequence, 1420 residues long: Mediator of RNA polymerase II transcription subunit 13 (1420 aa).

3 positions are modified to phosphoserine: S370, S375, and S425. The span at 416–427 (TTVSNDLENSPL) shows a compositional bias: polar residues. The interval 416 to 511 (TTVSNDLENS…TNESNKSISD (96 aa)) is disordered. Basic and acidic residues predominate over residues 429 to 439 (TELEANGRSLE). Residues 440–453 (KVNNSVSKTGSVDT) are compositionally biased toward polar residues. The span at 454-484 (LHNKEGTLEQREQNENLPSDKSDSMVDKELF) shows a compositional bias: basic and acidic residues. A compositionally biased stretch (low complexity) spans 494 to 508 (GDSNKSNSTNESNKS). Residue T601 is modified to Phosphothreonine. A Phosphoserine; by PKA modification is found at S608. S636 bears the Phosphoserine mark. A disordered region spans residues 653-691 (LSSSEEEEDEEENGSSDEDLKSLNVRDDMKPSDNISTNT). The segment covering 655–669 (SSEEEEDEEENGSSD) has biased composition (acidic residues). Residues 670 to 683 (EDLKSLNVRDDMKP) are compositionally biased toward basic and acidic residues. The residue at position 748 (S748) is a Phosphoserine.

Belongs to the Mediator complex subunit 13 family. Component of the SRB8-11 complex which consists of SRB8, SSN2/SRB9, SSN3/SRB10 and SSN8/SRB11. The SRB8-11 complex associates with the Mediator complex. The SSN3/SRB10 and SSN8/SRB11 kinase-cyclin pair also associate with the RNA polymerase II holoenzyme. Phosphorylated. PKA-dependent phosphorylation at 'Ser-608' is enhanced by activation of the RAS signaling pathway.

It is found in the nucleus. Component of the SRB8-11 complex. The SRB8-11 complex is a regulatory module of the Mediator complex which is itself involved in regulation of basal and activated RNA polymerase II-dependent transcription. The SRB8-11 complex may be involved in the transcriptional repression of a subset of genes regulated by Mediator. It may inhibit the association of the Mediator complex with RNA polymerase II to form the holoenzyme complex. The SRB8-11 complex phosphorylates the C-terminal domain (CTD) of the largest subunit of RNA polymerase II RPB1 at serines 2 and 5. The chain is Mediator of RNA polymerase II transcription subunit 13 (SSN2) from Saccharomyces cerevisiae (strain ATCC 204508 / S288c) (Baker's yeast).